Consider the following 449-residue polypeptide: Type 3 secretion system ATPase (449 aa).

ATP is bound at residue 178–183 (GCGKTT).

It belongs to the ATPase alpha/beta chains family. T3SS ATPase subfamily. The core secretion machinery of the T3SS is composed of approximately 20 different proteins, including cytoplasmic components, a base, an export apparatus and a needle. This subunit is part of the cytosolic complex. Forms homododecamers.

It localises to the cytoplasm. It carries out the reaction ATP + H2O + cellular proteinSide 1 = ADP + phosphate + cellular proteinSide 2.. Functionally, ATPase component of the type III secretion system (T3SS), also called injectisome, which is used to inject bacterial effector proteins into eukaryotic host cells. Acts as a molecular motor to provide the energy that is required for the export of proteins. Required for type III secretion apparatus (T3SA) formation, proper protein secretion, host cell invasion and virulence. May play a critical role in T3SS substrate recognition, disassembly of the effector/chaperone complex and unfolding of the effector in an ATP-dependent manner prior to secretion. The sequence is that of Type 3 secretion system ATPase from Pseudomonas syringae pv. tomato (strain ATCC BAA-871 / DC3000).